The sequence spans 595 residues: L-allo-isoleucine:holo-[CmaA peptidyl-carrier protein] ligase (595 aa).

One can recognise a Carrier domain in the interval 507-582 (VVSPQAGSAV…EWVQYYATHA (76 aa)). At Ser-542 the chain carries O-(pantetheine 4'-phosphoryl)serine.

The protein belongs to the ATP-dependent AMP-binding enzyme family. Homodimer. Pantetheine 4'-phosphate is required as a cofactor.

The enzyme catalyses L-alloisoleucine + holo-[CmaA peptidyl-carrier protein] + ATP = L-alloisoleucyl-[CmaA peptidyl-carrier protein] + AMP + diphosphate. Functionally, involved in the biosynthesis of the phytotoxin coronatine (COR) which mimics the plant hormone jasmonic acid isoleucine and promotes opening of stomata for bacterial entry, bacterial growth in the apoplast, systemic susceptibility, and disease symptoms. CmaA catalyzes the adenylation of L-allo-isoleucine (via the A domain) and the attachment of L-allo-isoleucine to the 4'-phosphopantetheine arm located within the T domain of CmaA. It can also use L-isoleucine, L-leucine and L-valine as substrates. The polypeptide is L-allo-isoleucine:holo-[CmaA peptidyl-carrier protein] ligase (Pseudomonas savastanoi pv. glycinea (Pseudomonas syringae pv. glycinea)).